The primary structure comprises 521 residues: Replicase polyprotein 1ab (521 aa).

The AV-Nsp11N/CoV-Nsp15M domain occupies 1 to 58 (GGGGQSFLAADNAVLVSTQCYKRHSYVEIPSNLLVQNGMSLKDGANLYVYKRVNGAFV). Positions 75 to 216 (EPRSDVERDF…EDGSIKTCYP (142 aa)) constitute a NendoU domain. Residues His-104, His-119, Lys-159, Lys-263, Asp-347, Lys-391, and Glu-424 contribute to the active site. One can recognise a Nidovirus-type SAM-dependent 2'-O-MTase domain in the interval 219–518 (QSAWTCGYNM…NTSFTSDSFV (300 aa)).

Its function is as follows. The replicase polyprotein of coronaviruses is a multifunctional protein: it contains the activities necessary for the transcription of negative stranded RNA, leader RNA, subgenomic mRNAs and progeny virion RNA as well as proteinases responsible for the cleavage of the polyprotein into functional products. In terms of biological role, nendoU is a Mn(2+)-dependent, uridylate-specific enzyme, which leaves 2'-3'-cyclic phosphates 5' to the cleaved bond. The sequence is that of Replicase polyprotein 1ab (rep) from Gallus gallus (Chicken).